We begin with the raw amino-acid sequence, 551 residues long: Cleavage and polyadenylation specificity factor subunit 6 (551 aa).

Residues 1-213 (MADGVDHIDI…RGRFPGAVPG (213 aa)) form a necessary for interaction with NXF1 region. Positions 81–161 (IALYIGNLTW…QNPVVTPCNK (81 aa)) constitute an RRM domain. Residues 81-161 (IALYIGNLTW…QNPVVTPCNK (81 aa)) are necessary for interaction with NUDT21/CPSF5. The interval 81-161 (IALYIGNLTW…QNPVVTPCNK (81 aa)) is necessary for nuclear paraspeckles localization. Thr157 carries the post-translational modification Phosphothreonine. Residues 169 to 180 (MQSRKTTQSGQM) show a composition bias toward polar residues. Disordered stretches follow at residues 169–411 (MQSR…PLSE) and 477–551 (LHGI…YRHR). The GAR signature appears at 202-206 (RGRGR). Low complexity predominate over residues 207–219 (FPGAVPGGDRFPG). Composition is skewed to pro residues over residues 220–265 (PAGP…PLAG), 285–366 (GQPP…PPPT), and 377–388 (GPPPTDPYGRPP). Residues 389 to 404 (PYDRGDYGPPGREMDT) show a composition bias toward basic and acidic residues. Thr404 and Thr407 each carry phosphothreonine. Residues 404 to 551 (TARTPLSEAE…RDREREYRHR (148 aa)) form a sufficient for nuclear speckle localization region. A necessary for RNA-binding region spans residues 405-551 (ARTPLSEAEF…RDREREYRHR (147 aa)). Residues 481–551 (ESKSYGSGSR…RDREREYRHR (71 aa)) are necessary for interaction with SRSF3, SRSF7 and TRA2B/SFRS10. A compositionally biased stretch (basic and acidic residues) spans 489–503 (SRRERSRERDHSRSR). The segment at 490–551 (RRERSRERDH…RDREREYRHR (62 aa)) is arg/Ser-rich domain. 5 positions are modified to phosphoserine: Ser494, Ser500, Ser511, Ser513, and Ser525. Positions 504-514 (EKSRRHKSRSR) are enriched in basic residues. The tract at residues 510–551 (KSRSRDRHDDYYRERSRERERHRDRDRDRDRERDREREYRHR) is sufficient for nuclear targeting. Residues 515–551 (DRHDDYYRERSRERERHRDRDRDRDRERDREREYRHR) are compositionally biased toward basic and acidic residues.

The protein belongs to the RRM CPSF6/7 family. In terms of assembly, component of the cleavage factor Im (CFIm) complex which is a heterotetramer composed of two subunits of NUDT21/CPSF5 and two subunits of CPSF6 or CPSF7 or a heterodimer of CPSF6 and CPSF7. The cleavage factor Im (CFIm) complex associates with the CPSF and CSTF complexes to promote the assembly of the core mRNA 3'-processing machinery. Associates with the exon junction complex (EJC). Associates with the 80S ribosome particle. Interacts (via the RRM domain) with NUDT21/CPSF5; this interaction is direct and enhances binding to RNA. Interacts (via Arg/Ser-rich domain) with FIP1L1 (preferentially via unphosphorylated form and Arg/Glu/Asp-rich domain); this interaction mediates, at least in part, the interaction between the CFIm and CPSF complexes and may be inhibited by CPSF6 hyper-phosphorylation. Interacts (via N-terminus) with NXF1; this interaction is direct. Interacts with SRSF3. Interacts with SRSF7. Interacts with SNRNP70. Interacts with TRA2B/SFRS10. Interacts with UPF1. Interacts with UPF3B. Interacts with VIRMA. Interacts (via Arg/Ser-rich domain) with TNPO3; promoting nuclear import of CPSF6 independently of its phosphorylation status. Interacts with YTHDC1. Phosphorylated. Phosphorylated in the Arg/Ser-rich domain by SRPK1, in vitro. In terms of processing, symmetrically dimethylated on arginine residues in the GAR motif by PRMT5 in a WDR77- and CLNS1A-dependent manner. Asymmetrically dimethylated on arginine residues in the GAR motif by PRMT1.

It is found in the nucleus. It localises to the nucleoplasm. The protein localises to the nucleus speckle. The protein resides in the cytoplasm. Its function is as follows. Component of the cleavage factor Im (CFIm) complex that functions as an activator of the pre-mRNA 3'-end cleavage and polyadenylation processing required for the maturation of pre-mRNA into functional mRNAs. CFIm contributes to the recruitment of multiprotein complexes on specific sequences on the pre-mRNA 3'-end, so called cleavage and polyadenylation signals (pA signals). Most pre-mRNAs contain multiple pA signals, resulting in alternative cleavage and polyadenylation (APA) producing mRNAs with variable 3'-end formation. The CFIm complex acts as a key regulator of cleavage and polyadenylation site choice during APA through its binding to 5'-UGUA-3' elements localized in the 3'-untranslated region (UTR) for a huge number of pre-mRNAs. CPSF6 enhances NUDT21/CPSF5 binding to 5'-UGUA-3' elements localized upstream of pA signals and promotes RNA looping, and hence activates directly the mRNA 3'-processing machinery. Plays a role in mRNA export. This chain is Cleavage and polyadenylation specificity factor subunit 6, found in Bos taurus (Bovine).